A 298-amino-acid polypeptide reads, in one-letter code: Acidic endochitinase (298 aa).

The first 29 residues, 1–29, serve as a signal peptide directing secretion; that stretch reads MKPNMACLKQVSALLLPLLFISFFKPSHA. The 269-residue stretch at 30–298 folds into the GH18 domain; it reads GGISVYWGQN…GYSGAIIGSV (269 aa). Disulfide bonds link Cys49/Cys96 and Cys79/Cys86. Glu156 acts as the Proton donor in catalysis. Cys185 and Cys214 form a disulfide bridge.

The protein belongs to the glycosyl hydrolase 18 family. Chitinase class II subfamily.

The protein resides in the secreted. It localises to the extracellular space. The catalysed reaction is Random endo-hydrolysis of N-acetyl-beta-D-glucosaminide (1-&gt;4)-beta-linkages in chitin and chitodextrins.. This protein functions as a defense against chitin containing fungal pathogens. This Phaseolus angularis (Azuki bean) protein is Acidic endochitinase.